Consider the following 114-residue polypeptide: Integration host factor subunit alpha (114 aa).

Belongs to the bacterial histone-like protein family. As to quaternary structure, heterodimer of an alpha and a beta chain.

Its function is as follows. This protein is one of the two subunits of integration host factor, a specific DNA-binding protein that functions in genetic recombination as well as in transcriptional and translational control. The chain is Integration host factor subunit alpha from Afipia carboxidovorans (strain ATCC 49405 / DSM 1227 / KCTC 32145 / OM5) (Oligotropha carboxidovorans).